A 174-amino-acid polypeptide reads, in one-letter code: MAPTVMASSATSVAPFQGLKSTAGLPVSRRSNASSASVSNGGRIRCMQVWPIEGIKKFETLSYLPPLSTEALLKQVDYLIRSKWVPCLEFSKVGFIFREHNASPGYYDGRYWTMWKLPMFGCTDATQVLNEVEEVKKEYPDAYVRIIGFDNMRQVQCVSFIAFKPPGCQESGKA.

A chloroplast-targeting transit peptide spans 1 to 45 (MAPTVMASSATSVAPFQGLKSTAGLPVSRRSNASSASVSNGGRIR).

This sequence belongs to the RuBisCO small chain family. In terms of assembly, heterohexadecamer of 8 large and 8 small subunits.

It localises to the plastid. Its subcellular location is the chloroplast. Functionally, ruBisCO catalyzes two reactions: the carboxylation of D-ribulose 1,5-bisphosphate, the primary event in carbon dioxide fixation, as well as the oxidative fragmentation of the pentose substrate. Both reactions occur simultaneously and in competition at the same active site. Although the small subunit is not catalytic it is essential for maximal activity. The protein is Ribulose bisphosphate carboxylase small subunit, chloroplastic of Hordeum vulgare (Barley).